A 79-amino-acid chain; its full sequence is Exodeoxyribonuclease 7 small subunit (79 aa).

It belongs to the XseB family. As to quaternary structure, heterooligomer composed of large and small subunits.

Its subcellular location is the cytoplasm. The catalysed reaction is Exonucleolytic cleavage in either 5'- to 3'- or 3'- to 5'-direction to yield nucleoside 5'-phosphates.. Its function is as follows. Bidirectionally degrades single-stranded DNA into large acid-insoluble oligonucleotides, which are then degraded further into small acid-soluble oligonucleotides. This chain is Exodeoxyribonuclease 7 small subunit, found in Dechloromonas aromatica (strain RCB).